The sequence spans 107 residues: MAKIIFIEHNGTRHEVEAKPGLTVMEAARDNGVPGIDADCGGACACSTCHAYVDPAWVDKLPKALPTETDMIDFAYEPNPATSRLTCQIKVTSLLDGLVVHLPEKQI.

The 2Fe-2S ferredoxin-type domain occupies 2–106; sequence AKIIFIEHNG…GLVVHLPEKQ (105 aa). Positions 40, 46, 49, and 87 each coordinate [2Fe-2S] cluster.

Belongs to the adrenodoxin/putidaredoxin family. It depends on [2Fe-2S] cluster as a cofactor.

Its function is as follows. Ferredoxins are small electron carrier proteins that participate in various redox reactions. FdVI is an essential protein required for growth of R.capsulatus. May be involved in Fe-S cluster assembly. The polypeptide is Ferredoxin-6 (Rhodobacter capsulatus (Rhodopseudomonas capsulata)).